A 534-amino-acid chain; its full sequence is Phenylalanine N-monooxygenase CYP79D16 (534 aa).

Residues 1–21 form the signal peptide; the sequence is MEANVGFLTLCLAITLVRFLM. Cys472 is a heme binding site. An N-linked (GlcNAc...) asparagine glycan is attached at Asn500.

This sequence belongs to the cytochrome P450 family. The cofactor is heme. As to expression, expressed in seedlings.

It carries out the reaction L-phenylalanine + 2 reduced [NADPH--hemoprotein reductase] + 2 O2 = (E)-phenylacetaldehyde oxime + 2 oxidized [NADPH--hemoprotein reductase] + CO2 + 3 H2O + 2 H(+). In terms of biological role, involved in L-phenylalanine-derived cyanogenic glycoside biosynthesis, including prunasin and amygdalin defensive agents. Catalyzes the conversion of L-phenylalanine (Phe) into phenylacetaldoxime (PAOx). Cannot use tyrosine (Tyr), tryptophan (Trp) and valine (Val) as substrates. This chain is Phenylalanine N-monooxygenase CYP79D16, found in Prunus mume (Japanese apricot).